A 979-amino-acid polypeptide reads, in one-letter code: Translation initiation factor IF-2 (979 aa).

Residues 33–391 (VKSHSSTITT…TPPAEITLTE (359 aa)) are disordered. Low complexity-rich tracts occupy residues 54-63 (QKRPQAPKAQ) and 139-150 (AKTTSPKAEPAA). The segment covering 151–166 (PAAPKPKLMGPPPRPT) has biased composition (pro residues). Residues 234 to 252 (PELDEEPDTNNVEGDDDAT) are compositionally biased toward acidic residues. Composition is skewed to basic residues over residues 263–278 (PAAK…PSKR) and 294–303 (TKTSKLKRRP). The segment covering 314–328 (GTTTNNNAEVPSVSL) has biased composition (polar residues). Basic and acidic residues predominate over residues 371-380 (KEQRRDRPDV). The tr-type G domain occupies 468–641 (HRPPVVTIMG…LLVSEIEELS (174 aa)). The interval 477 to 484 (GHVDHGKT) is G1. 477-484 (GHVDHGKT) contacts GTP. The G2 stretch occupies residues 502–506 (GITQH). Residues 527–530 (DTPG) form a G3 region. GTP contacts are provided by residues 527 to 531 (DTPGH) and 581 to 584 (NKMD). The interval 581 to 584 (NKMD) is G4. Residues 617–619 (SAL) form a G5 region.

This sequence belongs to the TRAFAC class translation factor GTPase superfamily. Classic translation factor GTPase family. IF-2 subfamily.

The protein localises to the cytoplasm. Functionally, one of the essential components for the initiation of protein synthesis. Protects formylmethionyl-tRNA from spontaneous hydrolysis and promotes its binding to the 30S ribosomal subunits. Also involved in the hydrolysis of GTP during the formation of the 70S ribosomal complex. This chain is Translation initiation factor IF-2, found in Picosynechococcus sp. (strain ATCC 27264 / PCC 7002 / PR-6) (Agmenellum quadruplicatum).